A 592-amino-acid polypeptide reads, in one-letter code: Cyclin-dependent kinase-like 3 (592 aa).

The region spanning Tyr4–Phe286 is the Protein kinase domain. ATP contacts are provided by residues Val10–Val18 and Lys33. Residues Asn44–Glu50 carry the [NKR]KIAxRE motif. Asp125 serves as the catalytic Proton acceptor. Thr158 carries the phosphothreonine modification. Residue Tyr160 is modified to Phosphotyrosine. Basic and acidic residues predominate over residues Gly368 to Glu379. 2 disordered regions span residues Gly368–Asn390 and Arg459–Ile485. The segment covering Ser466–Ser477 has biased composition (polar residues).

It belongs to the protein kinase superfamily. CMGC Ser/Thr protein kinase family. CDC2/CDKX subfamily.

The protein resides in the cytoplasm. The enzyme catalyses L-seryl-[protein] + ATP = O-phospho-L-seryl-[protein] + ADP + H(+). It catalyses the reaction L-threonyl-[protein] + ATP = O-phospho-L-threonyl-[protein] + ADP + H(+). The sequence is that of Cyclin-dependent kinase-like 3 from Homo sapiens (Human).